A 141-amino-acid polypeptide reads, in one-letter code: Small ribosomal subunit protein uS8c (141 aa).

It belongs to the universal ribosomal protein uS8 family. In terms of assembly, part of the 30S ribosomal subunit.

The protein localises to the plastid. Its subcellular location is the chloroplast. Functionally, one of the primary rRNA binding proteins, it binds directly to 16S rRNA central domain where it helps coordinate assembly of the platform of the 30S subunit. The chain is Small ribosomal subunit protein uS8c (rps8) from Chlamydomonas reinhardtii (Chlamydomonas smithii).